Consider the following 325-residue polypeptide: Tetraacyldisaccharide 4'-kinase (325 aa).

58–65 (TVGGSGKT) provides a ligand contact to ATP.

The protein belongs to the LpxK family.

The catalysed reaction is a lipid A disaccharide + ATP = a lipid IVA + ADP + H(+). It participates in glycolipid biosynthesis; lipid IV(A) biosynthesis; lipid IV(A) from (3R)-3-hydroxytetradecanoyl-[acyl-carrier-protein] and UDP-N-acetyl-alpha-D-glucosamine: step 6/6. Transfers the gamma-phosphate of ATP to the 4'-position of a tetraacyldisaccharide 1-phosphate intermediate (termed DS-1-P) to form tetraacyldisaccharide 1,4'-bis-phosphate (lipid IVA). The polypeptide is Tetraacyldisaccharide 4'-kinase (Coxiella burnetii (strain RSA 331 / Henzerling II)).